The chain runs to 648 residues: FAD-binding monooxygenase trt3 (648 aa).

Residues 118-121 (TWYW), 130-131 (DI), and Tyr136 contribute to the FAD site. Residue 128–130 (MCD) participates in NADP(+) binding. Residues 274-280 (TGSTAVQ) and 297-298 (RT) contribute to the NADP(+) site.

Belongs to the FAD-binding monooxygenase family. FAD serves as cofactor.

It participates in secondary metabolite biosynthesis; terpenoid biosynthesis. Its function is as follows. FAD-binding monooxygenase; part of the gene cluster that mediates the biosynthesis of terretonin, a fungal meroterpenoid that acts as a mycotoxin. The first step of the pathway is the synthesis of 3,5-dimethylorsellinic acid (DMOA) by the polyketide synthase trt4. DMOA is then prenylated into farnesyl-DMOA by the polyprenyl transferase trt2. Methylation by the methyltransferase trt5 then leads to farnesyl-DMOA methyl ester which is further subject to epoxidation by the FAD-dependent monooxygenase trt8 to yield epoxyfarnesyl-DMOA methyl ester. Cyclization of epoxyfarnesyl-DMOA methyl ester by the terpene cyclase trt1 leads to a tetracycle intermediate which is in turn converted to preterretonin. Dehydrogenase trt9 comes next to transform preterretonin to preterrenoid. The FAD-dependent monooxygenase trt3 is then required for the C-hydroxylation at C16 of preterrenoid to yield terrenoid. The cytochrome P450 trt6 catalyzes three successive oxidations to transform terrenoid into an unstable intermediate, which then undergoes the D-ring expansion and unusual rearrangement of the methoxy group to afford the core skeleton of terretonin. Trt14 catalyzes the D-ring expansion of terretonin involving intramolecular methoxy rearrangement as well as the hydrolysis of the expanded D-ring and the methyl ester moiety. Finally, the nonheme iron-dependent dioxygenase trt7 accomplishes the last two oxidation reactions steps to complete the biosynthesis of terretonin. Terretonin C is produced via spontaneous decarboxylation of the terretonin precursor. Another shunt product of the terretonin biosynthesis is dihydrofarnesyl-DMOA, derived from epoxyfarnesyl-DMOA through hydrolysis of the epoxide. This chain is FAD-binding monooxygenase trt3, found in Aspergillus terreus (strain NIH 2624 / FGSC A1156).